The primary structure comprises 91 residues: Small ribosomal subunit protein uS19 (91 aa).

It belongs to the universal ribosomal protein uS19 family.

Functionally, protein S19 forms a complex with S13 that binds strongly to the 16S ribosomal RNA. The protein is Small ribosomal subunit protein uS19 of Synechococcus sp. (strain CC9902).